Here is a 325-residue protein sequence, read N- to C-terminus: Tagatose 1,6-diphosphate aldolase 1 (325 aa).

It belongs to the aldolase LacD family.

It carries out the reaction D-tagatofuranose 1,6-bisphosphate = D-glyceraldehyde 3-phosphate + dihydroxyacetone phosphate. It functions in the pathway carbohydrate metabolism; D-tagatose 6-phosphate degradation; D-glyceraldehyde 3-phosphate and glycerone phosphate from D-tagatose 6-phosphate: step 2/2. The sequence is that of Tagatose 1,6-diphosphate aldolase 1 (lacD1) from Streptococcus mutans serotype c (strain ATCC 700610 / UA159).